We begin with the raw amino-acid sequence, 211 residues long: Probable GTP-binding protein EngB (211 aa).

Positions 26-200 constitute an EngB-type G domain; that stretch reads SGIEIAFAGR…RQKLDDWFAA (175 aa). GTP is bound by residues 34 to 41, 61 to 65, 79 to 82, 146 to 149, and 179 to 181; these read GRSNAGKS, GRTRL, DLPG, TKAD, and FSS. Positions 41 and 63 each coordinate Mg(2+).

It belongs to the TRAFAC class TrmE-Era-EngA-EngB-Septin-like GTPase superfamily. EngB GTPase family. Requires Mg(2+) as cofactor.

Its function is as follows. Necessary for normal cell division and for the maintenance of normal septation. This is Probable GTP-binding protein EngB from Sodalis glossinidius (strain morsitans).